The primary structure comprises 376 residues: Glucose-1-phosphate adenylyltransferase (376 aa).

Alpha-D-glucose 1-phosphate contacts are provided by residues tyrosine 101, glycine 166, 181 to 182, and serine 192; that span reads EK.

Belongs to the bacterial/plant glucose-1-phosphate adenylyltransferase family. Homotetramer.

It carries out the reaction alpha-D-glucose 1-phosphate + ATP + H(+) = ADP-alpha-D-glucose + diphosphate. It participates in glycan biosynthesis; glycogen biosynthesis. Its function is as follows. Involved in the biosynthesis of ADP-glucose, a building block required for the elongation reactions to produce glycogen. Catalyzes the reaction between ATP and alpha-D-glucose 1-phosphate (G1P) to produce pyrophosphate and ADP-Glc. The sequence is that of Glucose-1-phosphate adenylyltransferase from Bacillus cytotoxicus (strain DSM 22905 / CIP 110041 / 391-98 / NVH 391-98).